We begin with the raw amino-acid sequence, 402 residues long: MSLEGIGFGYRERAPYASNPAFSRGRLVPEPESPTRTPFQRDRDRIIHSTAFRRLKHKTQVFIAHEGDHYRTRLTHTIEVAQIARALARALRLDEDLAEAVALVHDFGHTPFGHTGEDALNERMKNFGGFDHNAQSLRIVTKLEHRYADFDGLNLSWETLEGLVKHNGPLLGPYAAHPDIPVPQPILDFNARYDLELSRFASLEAQCAAIADDIAYNAHDIDDGLRAGLLTLESLDEVPLAKRLLDIVRTRYPNLDPVRTGHELVRRQITIMVEDVIEEAQRRLASARPGTMEDVHNQPRALVGFSDAMRAEEKVLKRFLFKNLYFHESVVVRRHAADRIVQDLFDACFTDPSLMPDEWRLGCEALDKAALARRVADYLAGMTDNYAVREHRRLFDRTPDLA.

The interval 20–39 (PAFSRGRLVPEPESPTRTPF) is disordered. Residues 73–217 (RLTHTIEVAQ…AAIADDIAYN (145 aa)) enclose the HD domain.

The protein belongs to the dGTPase family. Type 2 subfamily.

The polypeptide is Deoxyguanosinetriphosphate triphosphohydrolase-like protein (Brucella canis (strain ATCC 23365 / NCTC 10854 / RM-666)).